The sequence spans 333 residues: Anthranilate phosphoribosyltransferase (333 aa).

5-phospho-alpha-D-ribose 1-diphosphate is bound by residues G81, 84–85, T89, 91–94, 109–117, and A121; these read GD, NIST, and KHGNRSVSS. G81 contributes to the anthranilate binding site. A Mg(2+)-binding site is contributed by S93. N112 contacts anthranilate. Position 167 (R167) interacts with anthranilate. D225 and E226 together coordinate Mg(2+).

It belongs to the anthranilate phosphoribosyltransferase family. As to quaternary structure, homodimer. The cofactor is Mg(2+).

It carries out the reaction N-(5-phospho-beta-D-ribosyl)anthranilate + diphosphate = 5-phospho-alpha-D-ribose 1-diphosphate + anthranilate. Its pathway is amino-acid biosynthesis; L-tryptophan biosynthesis; L-tryptophan from chorismate: step 2/5. Functionally, catalyzes the transfer of the phosphoribosyl group of 5-phosphorylribose-1-pyrophosphate (PRPP) to anthranilate to yield N-(5'-phosphoribosyl)-anthranilate (PRA). This chain is Anthranilate phosphoribosyltransferase, found in Haemophilus influenzae (strain PittGG).